The chain runs to 335 residues: Holliday junction branch migration complex subunit RuvB (335 aa).

Positions A4–Y184 are large ATPase domain (RuvB-L). Residues I23, R24, G65, K68, T69, T70, E131–Y133, R174, Y184, and R221 each bind ATP. Residue T69 participates in Mg(2+) binding. The interval S185 to D255 is small ATPAse domain (RuvB-S). Residues D258–D335 form a head domain (RuvB-H) region. Residues R294, R313, and R318 each contribute to the DNA site.

The protein belongs to the RuvB family. As to quaternary structure, homohexamer. Forms an RuvA(8)-RuvB(12)-Holliday junction (HJ) complex. HJ DNA is sandwiched between 2 RuvA tetramers; dsDNA enters through RuvA and exits via RuvB. An RuvB hexamer assembles on each DNA strand where it exits the tetramer. Each RuvB hexamer is contacted by two RuvA subunits (via domain III) on 2 adjacent RuvB subunits; this complex drives branch migration. In the full resolvosome a probable DNA-RuvA(4)-RuvB(12)-RuvC(2) complex forms which resolves the HJ.

It is found in the cytoplasm. The enzyme catalyses ATP + H2O = ADP + phosphate + H(+). The RuvA-RuvB-RuvC complex processes Holliday junction (HJ) DNA during genetic recombination and DNA repair, while the RuvA-RuvB complex plays an important role in the rescue of blocked DNA replication forks via replication fork reversal (RFR). RuvA specifically binds to HJ cruciform DNA, conferring on it an open structure. The RuvB hexamer acts as an ATP-dependent pump, pulling dsDNA into and through the RuvAB complex. RuvB forms 2 homohexamers on either side of HJ DNA bound by 1 or 2 RuvA tetramers; 4 subunits per hexamer contact DNA at a time. Coordinated motions by a converter formed by DNA-disengaged RuvB subunits stimulates ATP hydrolysis and nucleotide exchange. Immobilization of the converter enables RuvB to convert the ATP-contained energy into a lever motion, pulling 2 nucleotides of DNA out of the RuvA tetramer per ATP hydrolyzed, thus driving DNA branch migration. The RuvB motors rotate together with the DNA substrate, which together with the progressing nucleotide cycle form the mechanistic basis for DNA recombination by continuous HJ branch migration. Branch migration allows RuvC to scan DNA until it finds its consensus sequence, where it cleaves and resolves cruciform DNA. This chain is Holliday junction branch migration complex subunit RuvB, found in Haemophilus influenzae (strain 86-028NP).